A 117-amino-acid polypeptide reads, in one-letter code: Larval cuticle protein A2B (117 aa).

Repeat 1 spans residues 12–15 (AAPV). The Chitin-binding type R&amp;R domain occupies 29–95 (HPQYQYGYDV…AVVHREPLVA (67 aa)). Residues 108–111 (AAPV) form repeat 2.

In terms of biological role, component of the cuticle of the larva of Tenebrio molitor. The polypeptide is Larval cuticle protein A2B (Tenebrio molitor (Yellow mealworm beetle)).